The following is a 428-amino-acid chain: CRS2-associated factor 1, mitochondrial (428 aa).

A mitochondrion-targeting transit peptide spans 1–21 (MLLLAGLLRRARPPRRPSVRR). 2 disordered regions span residues 33-100 (PPAS…REPK) and 129-152 (HADD…RERV). 2 CRM domains span residues 155-253 (EPLT…KRPV) and 275-371 (EGLT…IQDN). The disordered stretch occupies residues 378 to 428 (SVLEEESAGAESENGDQEQASSDWASDECSQLSSSDEMPDDKSAISEADSD). Positions 380–393 (LEEESAGAESENGD) are enriched in acidic residues. Over residues 394 to 413 (QEQASSDWASDECSQLSSSD) the composition is skewed to polar residues.

As to quaternary structure, part of large ribonucleo-protein complexes that include group IIB introns.

It localises to the mitochondrion. May be involved in the splicing of group IIB introns in mitochondria. The chain is CRS2-associated factor 1, mitochondrial from Oryza sativa subsp. japonica (Rice).